The chain runs to 468 residues: Putative ankyrin repeat protein R580 (468 aa).

ANK repeat units lie at residues 12 to 41, 189 to 218, 249 to 278, 336 to 365, 367 to 393, and 394 to 423; these read DYFD…TLID, VINK…EINC, CHFD…KINS, SFDN…NINF, NMPT…DLEI, and HGTL…KFSL.

This is Putative ankyrin repeat protein R580 from Acanthamoeba polyphaga (Amoeba).